The following is a 308-amino-acid chain: uncharacterized protein (308 aa).

The S4 RNA-binding domain maps to 15–81; that stretch reads MRVDTGLARL…QNTPIDIEGM (67 aa). The active site involves Asp-139.

The protein belongs to the pseudouridine synthase RluA family.

The catalysed reaction is a uridine in RNA = a pseudouridine in RNA. This is an uncharacterized protein from Mycobacterium tuberculosis (strain CDC 1551 / Oshkosh).